Here is a 217-residue protein sequence, read N- to C-terminus: Thiopurine S-methyltransferase (217 aa).

Residues Trp-10, Leu-45, Glu-66, and Arg-127 each coordinate S-adenosyl-L-methionine.

It belongs to the class I-like SAM-binding methyltransferase superfamily. TPMT family.

The protein localises to the cytoplasm. It catalyses the reaction S-adenosyl-L-methionine + a thiopurine = S-adenosyl-L-homocysteine + a thiopurine S-methylether.. This Acinetobacter baylyi (strain ATCC 33305 / BD413 / ADP1) protein is Thiopurine S-methyltransferase.